The primary structure comprises 275 residues: Dermonecrotic toxin SpeSicTox-betaIIA1 (275 aa).

The active site involves H5. Mg(2+) is bound by residues E25 and D27. The active-site Nucleophile is the H41. Disulfide bonds link C45–C51 and C47–C190. D85 serves as a coordination point for Mg(2+).

Belongs to the arthropod phospholipase D family. Class II subfamily. The cofactor is Mg(2+). As to expression, expressed by the venom gland.

The protein resides in the secreted. It carries out the reaction an N-(acyl)-sphingosylphosphocholine = an N-(acyl)-sphingosyl-1,3-cyclic phosphate + choline. The catalysed reaction is an N-(acyl)-sphingosylphosphoethanolamine = an N-(acyl)-sphingosyl-1,3-cyclic phosphate + ethanolamine. It catalyses the reaction a 1-acyl-sn-glycero-3-phosphocholine = a 1-acyl-sn-glycero-2,3-cyclic phosphate + choline. The enzyme catalyses a 1-acyl-sn-glycero-3-phosphoethanolamine = a 1-acyl-sn-glycero-2,3-cyclic phosphate + ethanolamine. Its function is as follows. Dermonecrotic toxins cleave the phosphodiester linkage between the phosphate and headgroup of certain phospholipids (sphingolipid and lysolipid substrates), forming an alcohol (often choline) and a cyclic phosphate. This toxin acts on sphingomyelin (SM). It may also act on ceramide phosphoethanolamine (CPE), lysophosphatidylcholine (LPC) and lysophosphatidylethanolamine (LPE), but not on lysophosphatidylserine (LPS), and lysophosphatidylglycerol (LPG). It acts by transphosphatidylation, releasing exclusively cyclic phosphate products as second products. Induces dermonecrosis, hemolysis, increased vascular permeability, edema, inflammatory response, and platelet aggregation. This is Dermonecrotic toxin SpeSicTox-betaIIA1 from Sicarius peruensis (Six-eyed sand spider).